The primary structure comprises 251 residues: Triosephosphate isomerase (251 aa).

9–11 (NWK) provides a ligand contact to substrate. Histidine 96 (electrophile) is an active-site residue. Catalysis depends on glutamate 167, which acts as the Proton acceptor. Substrate-binding positions include glycine 173, serine 213, and 234-235 (GG).

This sequence belongs to the triosephosphate isomerase family. In terms of assembly, homodimer.

The protein resides in the cytoplasm. The enzyme catalyses D-glyceraldehyde 3-phosphate = dihydroxyacetone phosphate. It functions in the pathway carbohydrate biosynthesis; gluconeogenesis. The protein operates within carbohydrate degradation; glycolysis; D-glyceraldehyde 3-phosphate from glycerone phosphate: step 1/1. Functionally, involved in the gluconeogenesis. Catalyzes stereospecifically the conversion of dihydroxyacetone phosphate (DHAP) to D-glyceraldehyde-3-phosphate (G3P). In Bacteroides fragilis (strain ATCC 25285 / DSM 2151 / CCUG 4856 / JCM 11019 / LMG 10263 / NCTC 9343 / Onslow / VPI 2553 / EN-2), this protein is Triosephosphate isomerase.